The primary structure comprises 185 residues: Protein LPA2 (185 aa).

Residues 1–46 (MALQIHSPCSFSTRPYHLFFTTRNPRFAIKCQNSQIESDTTEDPSR) constitute a chloroplast transit peptide. The segment at 35 to 105 (QIESDTTEDP…VFMSEEGAAK (71 aa)) is disordered. Low complexity predominate over residues 47–75 (SKNSSSSGVGFGSPASSSSPAKKLSAATS). The segment covering 83–92 (KREVNRRAPV) has biased composition (basic and acidic residues). 2 consecutive transmembrane segments (helical) span residues 115–135 (AFLLTWLGLGIVILIEGIILA) and 152–172 (VYPVFTPSVVLFVAGTTAYGV).

Its subcellular location is the plastid. The protein localises to the chloroplast membrane. This chain is Protein LPA2, found in Arabidopsis thaliana (Mouse-ear cress).